The following is a 445-amino-acid chain: 23S rRNA (uracil(1939)-C(5))-methyltransferase RlmD (445 aa).

A TRAM domain is found at 6–64 (RRLPREPFEIAITGLSHEGRGIAHHDERTLFVHGALPGERVRAVYTKRRRSVAEARVVE). Cysteine 77, cysteine 83, cysteine 86, and cysteine 165 together coordinate [4Fe-4S] cluster. S-adenosyl-L-methionine contacts are provided by glutamine 274, phenylalanine 303, asparagine 308, glutamate 324, aspartate 351, and aspartate 372. Cysteine 398 acts as the Nucleophile in catalysis.

This sequence belongs to the class I-like SAM-binding methyltransferase superfamily. RNA M5U methyltransferase family. RlmD subfamily.

It carries out the reaction uridine(1939) in 23S rRNA + S-adenosyl-L-methionine = 5-methyluridine(1939) in 23S rRNA + S-adenosyl-L-homocysteine + H(+). Catalyzes the formation of 5-methyl-uridine at position 1939 (m5U1939) in 23S rRNA. This Alkalilimnicola ehrlichii (strain ATCC BAA-1101 / DSM 17681 / MLHE-1) protein is 23S rRNA (uracil(1939)-C(5))-methyltransferase RlmD.